A 198-amino-acid polypeptide reads, in one-letter code: MDAILNYRSEDTEDYYTLLGCDELSSVEQILAEFKVRALECHPDKHPENPKAVETFQKLQKAKEILTNEESRARYDHWRRSQMSMPFQQWEALNDSVKTSMHWVVRGKKDLMLEESDKTHTTKMENEECNEQRERKKEELASTAEKTEQKEPKPLEKSVSPQNSDSSGFADVNGWHLRFRWSKDAPSELLRKFRNYEI.

M1 bears the N-acetylmethionine mark. One can recognise a J domain in the interval 14–79 (DYYTLLGCDE…ESRARYDHWR (66 aa)). The segment covering 114–156 (EESDKTHTTKMENEECNEQRERKKEELASTAEKTEQKEPKPLE) has biased composition (basic and acidic residues). Residues 114-169 (EESDKTHTTKMENEECNEQRERKKEELASTAEKTEQKEPKPLEKSVSPQNSDSSGF) are disordered. Residues S160, S166, and S182 each carry the phosphoserine modification.

Interacts with HSPA8. Interacts with TPH1. Interacts with TPH2. As to expression, expressed at high levels in brain, heart, and testis, and at reduced levels in kidney and stomach.

It is found in the cytoplasm. In terms of biological role, probable co-chaperone that participates in the proper folding of biopterin-dependent aromatic amino acid hydroxylases, which include phenylalanine-4-hydroxylase (PAH), tyrosine 3-monooxygenase (TH) and peripheral and neuronal tryptophan hydroxylases (TPH1 and TPH2). The chain is DnaJ homolog subfamily C member 12 (DNAJC12) from Homo sapiens (Human).